The following is a 498-amino-acid chain: ATP synthase subunit beta, chloroplastic (498 aa).

172-179 (GGAGVGKT) serves as a coordination point for ATP.

The protein belongs to the ATPase alpha/beta chains family. In terms of assembly, F-type ATPases have 2 components, CF(1) - the catalytic core - and CF(0) - the membrane proton channel. CF(1) has five subunits: alpha(3), beta(3), gamma(1), delta(1), epsilon(1). CF(0) has four main subunits: a(1), b(1), b'(1) and c(9-12).

The protein resides in the plastid. Its subcellular location is the chloroplast thylakoid membrane. The catalysed reaction is ATP + H2O + 4 H(+)(in) = ADP + phosphate + 5 H(+)(out). Functionally, produces ATP from ADP in the presence of a proton gradient across the membrane. The catalytic sites are hosted primarily by the beta subunits. The polypeptide is ATP synthase subunit beta, chloroplastic (Nicotiana rustica (Aztec tobacco)).